Consider the following 568-residue polypeptide: CRISPR-associated exonuclease Cas4/endonuclease Cas1 fusion (568 aa).

The tract at residues 1 to 209 is CRISPR-associated exonuclease Cas4; sequence MSVVVTRYRG…KCSLAPVCLP (209 aa). Residue cysteine 43 coordinates [4Fe-4S] cluster. The Mn(2+) site is built by aspartate 95 and glutamate 108. [4Fe-4S] cluster contacts are provided by cysteine 198, cysteine 201, and cysteine 207. Residues 232–568 are CRISPR-associated endonuclease Cas1; it reads VLHVATPGTR…PGLFATFRLR (337 aa). Residues glutamate 390, histidine 459, and glutamate 474 each contribute to the Mn(2+) site.

This sequence in the N-terminal section; belongs to the CRISPR-associated exonuclease Cas4 family. In the C-terminal section; belongs to the CRISPR-associated endonuclease Cas1 family. In terms of assembly, homodimer, forms a heterotetramer with a Cas2 homodimer. Requires [4Fe-4S] cluster as cofactor. The cofactor is Mg(2+). Mn(2+) serves as cofactor.

The catalysed reaction is exonucleolytic cleavage in the 5'- to 3'-direction to yield nucleoside 3'-phosphates.. Functionally, CRISPR (clustered regularly interspaced short palindromic repeat), is an adaptive immune system that provides protection against mobile genetic elements (viruses, transposable elements and conjugative plasmids). CRISPR clusters contain spacers, sequences complementary to antecedent mobile elements, and target invading nucleic acids. CRISPR clusters are transcribed and processed into CRISPR RNA (crRNA). The Cas4 region acts as a ssDNA exonuclease, while the Cas1 region acts as a dsDNA endonuclease. Involved in the integration of spacer DNA into the CRISPR cassette. The polypeptide is CRISPR-associated exonuclease Cas4/endonuclease Cas1 fusion (cas4-cas1) (Myxococcus xanthus (strain DK1622)).